The primary structure comprises 630 residues: Pro-interleukin-16 (630 aa).

2 disordered regions span residues 30-268 and 316-343; these read ENPG…FPLT and PKEG…ASDT. Low complexity predominate over residues 129–143; the sequence is IRASSSSSIKQRISS. Position 220 is a phosphoserine (Ser220). Residues 321 to 343 show a composition bias toward polar residues; sequence SPTSSSNEDSAANGSAETSASDT. Positions 404-500 are interaction with PPP1R12A, PPP1R12B and PPP1R12C; it reads KQLDSIHVTI…IVTRKLTAES (97 aa). 2 consecutive PDZ domains span residues 410–495 and 532–617; these read HVTI…VTRK and TVTL…IRRK.

In terms of assembly, homotetramer. Pro-interleukin-16 interacts (via PDZ 2 domain) with PPP1R12A, PPP1R12B and PPP1R12C. Pro-interleukin-16 interacts with GRIN2A. Pro-interleukin-16 interacts with GABPB1. Pro-interleukin-16 interacts (via PDZ 3 domain) with HDAC3.

The protein localises to the secreted. Its subcellular location is the cytoplasm. It localises to the nucleus. In terms of biological role, interleukin-16 stimulates a migratory response in CD4+ lymphocytes, monocytes, and eosinophils. Primes CD4+ T-cells for IL-2 and IL-15 responsiveness. Also induces T-lymphocyte expression of interleukin 2 receptor. Ligand for CD4. Its function is as follows. Pro-interleukin-16 is involved in cell cycle progression in T-cells. Appears to be involved in transcriptional regulation of SKP2 and is probably part of a transcriptional repression complex on the core promoter of the SKP2 gene. May act as a scaffold for GABPB1 (the DNA-binding subunit the GABP transcription factor complex) and HDAC3 thus maintaining transcriptional repression and blocking cell cycle progression in resting T-cells. This is Pro-interleukin-16 (IL16) from Macaca fascicularis (Crab-eating macaque).